The sequence spans 196 residues: Carnitine operon protein CaiE (196 aa).

The interval 173–196 is disordered; the sequence is TQPLRQMEENRPRLQGTTDVTPKR. Residues 187 to 196 show a composition bias toward polar residues; the sequence is QGTTDVTPKR.

The protein belongs to the transferase hexapeptide repeat family.

The protein operates within amine and polyamine metabolism; carnitine metabolism. Its function is as follows. Overproduction of CaiE stimulates the activity of CaiB and CaiD. The chain is Carnitine operon protein CaiE from Escherichia coli O7:K1 (strain IAI39 / ExPEC).